We begin with the raw amino-acid sequence, 70 residues long: uncharacterized protein (70 aa).

The segment at 40-70 (LHQQRTAHKVTSPPSQRPQNSETKSDSQNRS) is disordered. The segment covering 51 to 61 (SPPSQRPQNSE) has biased composition (polar residues).

This is an uncharacterized protein from Bdellovibrio phage phiMH2K (Bacteriophage phiMH2K).